A 540-amino-acid chain; its full sequence is Cytochrome P450 monooxygenase CYP3 (540 aa).

N-linked (GlcNAc...) asparagine glycosylation is present at Asn2. The helical transmembrane segment at 26 to 46 threads the bilayer; that stretch reads IFGLSSSTLVVLVAMIAVSTL. 3 N-linked (GlcNAc...) asparagine glycosylation sites follow: Asn100, Asn210, and Asn400. Residue Cys471 participates in heme binding.

This sequence belongs to the cytochrome P450 family. The cofactor is heme.

The protein resides in the membrane. It participates in secondary metabolite biosynthesis. Functionally, cytochrome P450 monooxygenase; part of the gene cluster that mediates the biosynthesis of itaconic acid and 2-hydroxyparaconate. Cis-aconitate is secreted by the mitochondrial tricarboxylate transporter MTT1. In the cytosol cis-aconitate is converted into trans-aconitate via isomerization by the aconitate-delta-isomerase ADI1. Decarboxylation of trans-aconitate by the trans-aconitate decarboxylase TAD1 then leads then to the production of itaconic acid. The cytochrome P450 monooxygenase CYP3 further converts itaconate to 2-hydroxyparaconate via oxidation of the double bond, leading to a transient epoxide, which can subsequently be lactonized to produce 2-hydroxyparaconate. Secretion of itaconate and possibly 2-hydroxyparaconate into the medium is mediated by the major facilitator ITP1. The glyoxalase domain-containing protein RDO1 is not involved in the biosynthesis of itaconate and 2-hydroxyparaconate, however, it might play a role in the further conversion of 2-hydroxyparaconate to itatartarate. This chain is Cytochrome P450 monooxygenase CYP3, found in Mycosarcoma maydis (Corn smut fungus).